Reading from the N-terminus, the 480-residue chain is Glutamyl-tRNA(Gln) amidotransferase subunit A (480 aa).

Residues Lys-70 and Ser-145 each act as charge relay system in the active site. Ser-169 acts as the Acyl-ester intermediate in catalysis.

It belongs to the amidase family. GatA subfamily. In terms of assembly, heterotrimer of A, B and C subunits.

It catalyses the reaction L-glutamyl-tRNA(Gln) + L-glutamine + ATP + H2O = L-glutaminyl-tRNA(Gln) + L-glutamate + ADP + phosphate + H(+). In terms of biological role, allows the formation of correctly charged Gln-tRNA(Gln) through the transamidation of misacylated Glu-tRNA(Gln) in organisms which lack glutaminyl-tRNA synthetase. The reaction takes place in the presence of glutamine and ATP through an activated gamma-phospho-Glu-tRNA(Gln). In Lactobacillus delbrueckii subsp. bulgaricus (strain ATCC BAA-365 / Lb-18), this protein is Glutamyl-tRNA(Gln) amidotransferase subunit A.